The chain runs to 122 residues: Ribosome-binding factor A (122 aa).

Belongs to the RbfA family. Monomer. Binds 30S ribosomal subunits, but not 50S ribosomal subunits or 70S ribosomes.

Its subcellular location is the cytoplasm. One of several proteins that assist in the late maturation steps of the functional core of the 30S ribosomal subunit. Associates with free 30S ribosomal subunits (but not with 30S subunits that are part of 70S ribosomes or polysomes). Required for efficient processing of 16S rRNA. May interact with the 5'-terminal helix region of 16S rRNA. The sequence is that of Ribosome-binding factor A from Dichelobacter nodosus (strain VCS1703A).